The sequence spans 257 residues: Type III pantothenate kinase (257 aa).

6 to 13 is a binding site for ATP; sequence DCGNTNTV. 107–110 lines the substrate pocket; it reads GPDR. Aspartate 109 serves as the catalytic Proton acceptor. Residue aspartate 129 coordinates K(+). Residue threonine 132 coordinates ATP. Substrate is bound at residue threonine 184.

This sequence belongs to the type III pantothenate kinase family. As to quaternary structure, homodimer. NH4(+) is required as a cofactor. Requires K(+) as cofactor.

Its subcellular location is the cytoplasm. It catalyses the reaction (R)-pantothenate + ATP = (R)-4'-phosphopantothenate + ADP + H(+). Its pathway is cofactor biosynthesis; coenzyme A biosynthesis; CoA from (R)-pantothenate: step 1/5. In terms of biological role, catalyzes the phosphorylation of pantothenate (Pan), the first step in CoA biosynthesis. In Cereibacter sphaeroides (strain ATCC 17025 / ATH 2.4.3) (Rhodobacter sphaeroides), this protein is Type III pantothenate kinase.